The chain runs to 436 residues: MSGATSGLTPEQIGAIDAAHLWHPYSTIGAATGVIPPVVAVAAHGAWLTLIRDGKPIEALDAMSSWWTAIHGHGHSVLDAALTTQLGAMNHVMFGGLTHEPAARLAQLLVDITPAGLETVFFSDSGSVSVQVAVKMALQYWRSRGQPAKRRLMTWRGGYHGDTLTPMSICDPDGGMHSLWTDILARQVFAPQVPRDYDPAYSKAFETQLAQHTPELAAVVVEPVVQGAGGMRFHDPRYLCDVRDICRRHDVLLIFDEIATGFGRTGELFAADHCGVSPDIMCVGKALTGGYLSLAATLCTTDIAHAISVGAAGALMHGPTFMANPLACAVSVASVEVLLGQDWRSRVAEISAGLTAGLEAAQGLPGVIDVRVCGAIGVIECDRSVDLAVATPAALDRRVWLRPFRNLVYAMPPYICPPAEIAQITSAMVEVAGLVG.

Residue Trp66 participates in substrate binding. 126-127 (GS) contributes to the pyridoxal 5'-phosphate binding site. Tyr159 is a substrate binding site. Asp256 contacts pyridoxal 5'-phosphate. Residues Lys285 and Gly318 each coordinate substrate. Lys285 is modified (N6-(pyridoxal phosphate)lysine). Position 319–320 (319–320 (PT)) interacts with pyridoxal 5'-phosphate. Arg402 is a substrate binding site.

It belongs to the class-III pyridoxal-phosphate-dependent aminotransferase family. BioA subfamily. In terms of assembly, homodimer. The cofactor is pyridoxal 5'-phosphate.

The protein localises to the cytoplasm. It catalyses the reaction (8S)-8-amino-7-oxononanoate + S-adenosyl-L-methionine = S-adenosyl-4-methylsulfanyl-2-oxobutanoate + (7R,8S)-7,8-diammoniononanoate. It functions in the pathway cofactor biosynthesis; biotin biosynthesis; 7,8-diaminononanoate from 8-amino-7-oxononanoate (SAM route): step 1/1. Catalyzes the transfer of the alpha-amino group from S-adenosyl-L-methionine (SAM) to 7-keto-8-aminopelargonic acid (KAPA) to form 7,8-diaminopelargonic acid (DAPA). It is the only aminotransferase known to utilize SAM as an amino donor. This Mycobacterium leprae (strain TN) protein is Adenosylmethionine-8-amino-7-oxononanoate aminotransferase.